Here is a 178-residue protein sequence, read N- to C-terminus: uncharacterized protein (178 aa).

This is an uncharacterized protein from Saccharolobus islandicus (Sulfolobus islandicus).